A 500-amino-acid chain; its full sequence is Glycerol kinase (500 aa).

An ADP-binding site is contributed by threonine 12. Threonine 12, threonine 13, and serine 14 together coordinate ATP. Residue threonine 12 coordinates sn-glycerol 3-phosphate. An ADP-binding site is contributed by arginine 16. The sn-glycerol 3-phosphate site is built by arginine 82, glutamate 83, tyrosine 135, and aspartate 245. Arginine 82, glutamate 83, tyrosine 135, aspartate 245, and glutamine 246 together coordinate glycerol. Positions 267 and 310 each coordinate ADP. ATP contacts are provided by threonine 267, glycine 310, glutamine 314, and glycine 411. Positions 411 and 415 each coordinate ADP.

This sequence belongs to the FGGY kinase family. In terms of assembly, homotetramer and homodimer (in equilibrium).

The catalysed reaction is glycerol + ATP = sn-glycerol 3-phosphate + ADP + H(+). It functions in the pathway polyol metabolism; glycerol degradation via glycerol kinase pathway; sn-glycerol 3-phosphate from glycerol: step 1/1. Activated by phosphorylation and inhibited by fructose 1,6-bisphosphate (FBP). Key enzyme in the regulation of glycerol uptake and metabolism. Catalyzes the phosphorylation of glycerol to yield sn-glycerol 3-phosphate. The protein is Glycerol kinase of Clostridium perfringens (strain SM101 / Type A).